A 297-amino-acid chain; its full sequence is 4-hydroxy-tetrahydrodipicolinate synthase (297 aa).

T46 contacts pyruvate. The active-site Proton donor/acceptor is Y134. The active-site Schiff-base intermediate with substrate is K162. I209 lines the pyruvate pocket.

Belongs to the DapA family. As to quaternary structure, homotetramer; dimer of dimers.

The protein resides in the cytoplasm. It catalyses the reaction L-aspartate 4-semialdehyde + pyruvate = (2S,4S)-4-hydroxy-2,3,4,5-tetrahydrodipicolinate + H2O + H(+). It participates in amino-acid biosynthesis; L-lysine biosynthesis via DAP pathway; (S)-tetrahydrodipicolinate from L-aspartate: step 3/4. Catalyzes the condensation of (S)-aspartate-beta-semialdehyde [(S)-ASA] and pyruvate to 4-hydroxy-tetrahydrodipicolinate (HTPA). The sequence is that of 4-hydroxy-tetrahydrodipicolinate synthase from Methanosphaera stadtmanae (strain ATCC 43021 / DSM 3091 / JCM 11832 / MCB-3).